The chain runs to 1046 residues: MASSVGNVADSTEPTKRMLSFQGLAELAHREYQAGDFEAAERHCMQLWRQEPDNTGVLLLLSSIHFQCRRLDRSAHFSTLAIKQNPLLAEAYSNLGNVYKERGQLQEAIEHYRHALRLKPDFIDGYINLAAALVAAGDMEGAVQAYVSALQYNPDLYCVRSDLGNLLKALGRLEEAKACYLKAIETQPNFAVAWSNLGCVFNAQGEIWLAIHHFEKAVTLDPNFLDAYINLGNVLKEARIFDRAVAAYLRALSLSPNHAVVHGNLACVYYEQGLIDLAIDTYRRAIELQPHFPDAYCNLANALKEKGSVAEAEDCYNTALRLCPTHADSLNNLANIKREQGNIEEAVRLYRKALEVFPEFAAAHSNLASVLQQQGKLQEALMHYKEAIRISPTFADAYSNMGNTLKEMQDVQGALQCYTRAIQINPAFADAHSNLASIHKDSGNIPEAIASYRTALKLKPDFPDAYCNLAHCLQIVCDWTDYDERMKKLVSIVADQLEKNRLPSVHPHHSMLYPLSHGFRKAIAERHGNLCLDKINVLHKPPYEHPKDLKLSDGRLRVGYVSSDFGNHPTSHLMQSIPGMHNPDKFEVFCYALSPDDGTNFRVKVMAEANHFIDLSQIPCNGKAADRIHQDGIHILVNMNGYTKGARNELFALRPAPIQAMWLGYPGTSGALFMDYIITDQETSPAEVAEQYSEKLAYMPHTFFIGDHANMFPHLKKKAVIDFKSNGHIYDNRIVLNGIDLKAFLDSLPDVKIVKMKCPDGGDNADSSNTALNMPVIPMNTIAEAVIEMINRGQIQITINGFSISNGLATTQINNKAATGEEVPRTIIVTTRSQYGLPEDAIVYCNFNQLYKIDPSTLQMWANILKRVPNSVLWLLRFPAVGEPNIQQYAQNMGLPQNRIIFSPVAPKEEHVRRGQLADVCLDTPLCNGHTTGMDVLWAGTPMVTMPGETLASRVAASQLTCLGCLELIAKNRQEYEDIAVKLGTDLEYLKKVRGKVWKQRISSPLFNTKQYTMELERLYLQMWEHYAAGNKPDHMIKPVEVTESA.

Ala2 is modified (N-acetylalanine). Residues Ser3 and Ser4 each carry the phosphoserine; by GSK3-beta; alternate modification. O-linked (GlcNAc) serine; alternate glycans are attached at residues Ser3 and Ser4. Asp10 carries O-linked (GlcNAc) serine glycosylation. Thr12 carries O-linked (GlcNAc) threonine glycosylation. A glycan (O-linked (GlcNAc) serine) is linked at Met18. A Phosphoserine modification is found at Ser20. The TPR 1 repeat unit spans residues 21-54 (FQGLAELAHREYQAGDFEAAERHCMQLWRQEPDN). Glu38 carries O-linked (GlcNAc) threonine glycosylation. Residues Pro52 and Gly56 are each glycosylated (O-linked (GlcNAc) serine). TPR repeat units follow at residues 89–122 (AEAYSNLGNVYKERGQLQEAIEHYRHALRLKPDF), 123–156 (IDGYINLAAALVAAGDMEGAVQAYVSALQYNPDL), 157–190 (YCVRSDLGNLLKALGRLEEAKACYLKAIETQPNF), 191–224 (AVAWSNLGCVFNAQGEIWLAIHHFEKAVTLDPNF), 225–258 (LDAYINLGNVLKEARIFDRAVAAYLRALSLSPNH), 259–292 (AVVHGNLACVYYEQGLIDLAIDTYRRAIELQPHF), 293–326 (PDAYCNLANALKEKGSVAEAEDCYNTALRLCPTH), 327–360 (ADSLNNLANIKREQGNIEEAVRLYRKALEVFPEF), 361–394 (AAAHSNLASVLQQQGKLQEALMHYKEAIRISPTF), 395–428 (ADAYSNMGNTLKEMQDVQGALQCYTRAIQINPAF), and 429–462 (ADAHSNLASIHKDSGNIPEAIASYRTALKLKPDF). A glycan (O-linked (GlcNAc) serine; by autocatalysis) is linked at Ser399. A Phosphothreonine; by AMPK modification is found at Thr454. A TPR 13; truncated repeat occupies 463–473 (PDAYCNLAHCL). The DFP motif motif lies at 464 to 466 (DAY). A Nuclear localization signal motif is present at residues 487 to 503 (KKLVSIVADQLEKNRLP). His508 serves as the catalytic Proton acceptor. Residues Gln849, Lys852, 906–908 (APK), 911–914 (HVRR), 930–932 (HTT), and Asp935 contribute to the UDP site. Tyr989 is modified (phosphotyrosine). The tract at residues 991–1010 (KKVRGKVWKQRISSPLFNTK) is required for phosphatidylinositol 3,4,5-triphosphate binding.

The protein belongs to the glycosyltransferase 41 family. O-GlcNAc transferase subfamily. Monomer; may exist in different oligomerization states in cells. Homotrimer, oligomerizes via TPR repeats 6 and 7. Trimerization is not necessary for activity in vitro, however it increases affinity for UDP-GlcNAc. Component of a THAP1/THAP3-HCFC1-OGT complex. Component of the NSL complex at least composed of MOF/KAT8, KANSL1, KANSL2, KANSL3, MCRS1, PHF20, OGT1/OGT, WDR5 and HCFC1. Found in a complex with KIF5B, RHOT1, RHOT2 and TRAK1. Found in a complex composed of at least SINHCAF, SIN3A, HDAC1, SAP30, RBBP4, OGT and TET1. Component of a complex composed of KMT2E/MLL5 (isoform 3), OGT (isoform 1) and USP7; the complex stabilizes KMT2E/MLL5, preventing KMT2E/MLL5 ubiquitination and proteasomal-mediated degradation. Interacts (via TPRs 1-6) with SIN3A; the interaction mediates transcriptional repression in parallel with histone deacetylase. Interacts (via TPR 5-6) with TET1, TET2 and TET3. Interacts (via TPR repeats 6 and 7) with ATXN10. Interacts with NSD2. Interacts with PROSER1; this interaction mediates TET2 O-GlcNAcylation and stability by promoting the interaction between OGT and TET2. In terms of assembly, interacts with USP7. As to quaternary structure, (Microbial infection) Interacts with human T-cell leukemia virus 1/HTLV-1 protein Tax; this interaction increases Tax interacting partner CREB1 O-GlcNAcylation. Post-translationally, ubiquitinated by the SCF(FBXO31) complex, leading to its proteasomal degradation. In terms of processing, phosphorylation on Ser-3 or Ser-4 by GSK3-beta positively regulates its activity. Phosphorylation at Thr-454 by AMPK promotes nuclear localization. Glycosylated via autocatalysis; O-GlcNAcylation at Ser-399 promotes nuclear localization. Post-translationally, glycosylated via autocatalysis; does not affect the enzyme activity but regulates substrate selectivity. As to expression, highly expressed in pancreas and to a lesser extent in skeletal muscle, heart, brain and placenta. Present in trace amounts in lung and liver.

The protein localises to the nucleus. The protein resides in the cytoplasm. It localises to the mitochondrion. Its subcellular location is the membrane. It is found in the cell membrane. The protein localises to the mitochondrion membrane. The protein resides in the cell projection. It catalyses the reaction L-seryl-[protein] + UDP-N-acetyl-alpha-D-glucosamine = 3-O-(N-acetyl-beta-D-glucosaminyl)-L-seryl-[protein] + UDP + H(+). The catalysed reaction is L-threonyl-[protein] + UDP-N-acetyl-alpha-D-glucosamine = 3-O-(N-acetyl-beta-D-glucosaminyl)-L-threonyl-[protein] + UDP + H(+). It participates in protein modification; protein glycosylation. Subject to product inhibition by UDP. Its function is as follows. Catalyzes the transfer of a single N-acetylglucosamine from UDP-GlcNAc to a serine or threonine residue in cytoplasmic and nuclear proteins resulting in their modification with a beta-linked N-acetylglucosamine (O-GlcNAc). Glycosylates a large and diverse number of proteins including histone H2B, AKT1, AMPK, ATG4B, CAPRIN1, EZH2, FNIP1, GSDMD, KRT7, LMNA, LMNB1, LMNB2, RPTOR, HOXA1, PFKL, KMT2E/MLL5, MAPT/TAU, TET2, RBL2, RET, NOD2 and HCFC1. Can regulate their cellular processes via cross-talk between glycosylation and phosphorylation or by affecting proteolytic processing. Involved in insulin resistance in muscle and adipocyte cells via glycosylating insulin signaling components and inhibiting the 'Thr-308' phosphorylation of AKT1, enhancing IRS1 phosphorylation and attenuating insulin signaling. Involved in glycolysis regulation by mediating glycosylation of 6-phosphofructokinase PFKL, inhibiting its activity. Plays a key role in chromatin structure by mediating O-GlcNAcylation of 'Ser-112' of histone H2B: recruited to CpG-rich transcription start sites of active genes via its interaction with TET proteins (TET1, TET2 or TET3). As part of the NSL complex indirectly involved in acetylation of nucleosomal histone H4 on several lysine residues. O-GlcNAcylation of 'Ser-75' of EZH2 increases its stability, and facilitating the formation of H3K27me3 by the PRC2/EED-EZH2 complex. Stabilizes KMT2E/MLL5 by mediating its glycosylation, thereby preventing KMT2E/MLL5 ubiquitination. Regulates circadian oscillation of the clock genes and glucose homeostasis in the liver. Stabilizes clock proteins BMAL1 and CLOCK through O-glycosylation, which prevents their ubiquitination and subsequent degradation. Promotes the CLOCK-BMAL1-mediated transcription of genes in the negative loop of the circadian clock such as PER1/2 and CRY1/2. O-glycosylates HCFC1 and regulates its proteolytic processing and transcriptional activity. Component of a THAP1/THAP3-HCFC1-OGT complex that is required for the regulation of the transcriptional activity of RRM1. Regulates mitochondrial motility in neurons by mediating glycosylation of TRAK1. Promotes autophagy by mediating O-glycosylation of ATG4B. Acts as a regulator of mTORC1 signaling by mediating O-glycosylation of RPTOR and FNIP1: O-GlcNAcylation of RPTOR in response to glucose sufficiency promotes activation of the mTORC1 complex. The mitochondrial isoform (mOGT) is cytotoxic and triggers apoptosis in several cell types including INS1, an insulinoma cell line. Functionally, has N-acetylglucosaminyltransferase activity: glycosylates proteins, such as HNRNPU, NEUROD1, NUP62 and PDCD6IP. Displays specific substrate selectivity compared to other isoforms. The sequence is that of UDP-N-acetylglucosamine--peptide N-acetylglucosaminyltransferase 110 kDa subunit from Homo sapiens (Human).